The following is a 335-amino-acid chain: GTPase Obg (335 aa).

The Obg domain maps to 1–158 (MFVDQITLEL…RLVELELKLI (158 aa)). Residues 159 to 334 (ADIGLVGFPN…LHDLFKSKLS (176 aa)) form the OBG-type G domain. Residues 165 to 172 (GFPNAGKS), 190 to 194 (FTTLH), 215 to 218 (DIPG), 285 to 288 (NKID), and 315 to 317 (SGL) contribute to the GTP site. The Mg(2+) site is built by Ser-172 and Thr-192.

Belongs to the TRAFAC class OBG-HflX-like GTPase superfamily. OBG GTPase family. In terms of assembly, monomer. Mg(2+) serves as cofactor.

The protein localises to the cytoplasm. An essential GTPase which binds GTP, GDP and possibly (p)ppGpp with moderate affinity, with high nucleotide exchange rates and a fairly low GTP hydrolysis rate. Plays a role in control of the cell cycle, stress response, ribosome biogenesis and in those bacteria that undergo differentiation, in morphogenesis control. The polypeptide is GTPase Obg (Chlamydia muridarum (strain MoPn / Nigg)).